Consider the following 63-residue polypeptide: Keratin-associated protein 19-8 (63 aa).

The protein belongs to the KRTAP type 19 family. As to quaternary structure, interacts with hair keratins.

Its function is as follows. In the hair cortex, hair keratin intermediate filaments are embedded in an interfilamentous matrix, consisting of hair keratin-associated proteins (KRTAP), which are essential for the formation of a rigid and resistant hair shaft through their extensive disulfide bond cross-linking with abundant cysteine residues of hair keratins. The matrix proteins include the high-sulfur and high-glycine-tyrosine keratins. The protein is Keratin-associated protein 19-8 (KRTAP19-8) of Homo sapiens (Human).